Reading from the N-terminus, the 745-residue chain is Exocyst complex component 3 (745 aa).

K28 is modified (N6-acetyllysine).

It belongs to the SEC6 family. As to quaternary structure, the exocyst complex is composed of EXOC1, EXOC2, EXOC3, EXOC4, EXOC5, EXOC6, EXOC7 and EXOC8. Interacts with EXOC3L1. Interacts with BIRC6/bruce. Interacts with MYRIP. Interacts with SLC6A9.

Its subcellular location is the cytoplasm. It is found in the perinuclear region. The protein resides in the cell projection. It localises to the growth cone. The protein localises to the neuron projection. Its subcellular location is the midbody. It is found in the golgi apparatus. Its function is as follows. Component of the exocyst complex involved in the docking of exocytic vesicles with fusion sites on the plasma membrane. This Bos taurus (Bovine) protein is Exocyst complex component 3 (EXOC3).